We begin with the raw amino-acid sequence, 500 residues long: Intracellular exo-alpha-(1-&gt;5)-L-arabinofuranosidase (500 aa).

Residues Glu28, Asn73, and Asn173 each contribute to the alpha-L-arabinofuranose site. Glu174 functions as the Proton donor/acceptor in the catalytic mechanism. Residues Tyr245, Glu293, and Gln350 each coordinate alpha-L-arabinofuranose. Glu293 acts as the Nucleophile in catalysis.

The protein belongs to the glycosyl hydrolase 51 family. Homohexamer; trimer of dimers.

Its subcellular location is the cytoplasm. It catalyses the reaction Hydrolysis of terminal non-reducing alpha-L-arabinofuranoside residues in alpha-L-arabinosides.. Its pathway is glycan metabolism; L-arabinan degradation. Functionally, involved in the degradation of arabinan and is a key enzyme in the complete degradation of the plant cell wall. Catalyzes the cleavage of terminal alpha-(1-&gt;5)-arabinofuranosyl bonds in different hemicellulosic homopolysaccharides (branched and debranched arabinans). The protein is Intracellular exo-alpha-(1-&gt;5)-L-arabinofuranosidase (abfA) of Halalkalibacterium halodurans (strain ATCC BAA-125 / DSM 18197 / FERM 7344 / JCM 9153 / C-125) (Bacillus halodurans).